Reading from the N-terminus, the 20-residue chain is Blooming-related protein 2 (20 aa).

A disordered region spans residues 1–20; it reads VSAEYLERQGPKDDXDCFDD.

Its function is as follows. Possible 'checkpoint' protein for cell division in the blooming process. This is Blooming-related protein 2 from Prorocentrum triestinum (Red tide alga).